A 261-amino-acid polypeptide reads, in one-letter code: Ice-binding protein (261 aa).

Positions 1–20 (MSLLSIITIGLAGLGGLVNG) are cleaved as a signal peptide. Asn185 is a glycosylation site (N-linked (GlcNAc...) asparagine).

This sequence belongs to the ice-binding protein family. Homodimer. Dimerization is not required for the thermal hysteresis (TH) activity. Glycosylated. Glycosylation is not required for the thermal hysteresis (TH) activity. Glycosylation may increase stability and secretion of this protein.

It is found in the secreted. Functionally, confers freeze tolerance. Binds to the surface of ice crystals and inhibits their growth. Has low thermal hysteresis (TH) activity, which is the ability to lower the freezing point of an aqueous solution below its melting point. The TH activity of this protein is approximately 0.2 degrees Celsius at 50 uM and 0.3 degrees Celsius at 400 uM. This Leucosporidium sp. (strain AY30) (Arctic yeast) protein is Ice-binding protein.